The following is a 357-amino-acid chain: DNA polymerase IV 2 (357 aa).

Residues 4 to 184 enclose the UmuC domain; that stretch reads IIHVDMDAFY…LAVKKFHGVG (181 aa). Mg(2+) is bound by residues aspartate 8 and aspartate 102. Glutamate 103 is an active-site residue.

This sequence belongs to the DNA polymerase type-Y family. In terms of assembly, monomer. The cofactor is Mg(2+).

Its subcellular location is the cytoplasm. The catalysed reaction is DNA(n) + a 2'-deoxyribonucleoside 5'-triphosphate = DNA(n+1) + diphosphate. Functionally, poorly processive, error-prone DNA polymerase involved in untargeted mutagenesis. Copies undamaged DNA at stalled replication forks, which arise in vivo from mismatched or misaligned primer ends. These misaligned primers can be extended by PolIV. Exhibits no 3'-5' exonuclease (proofreading) activity. May be involved in translesional synthesis, in conjunction with the beta clamp from PolIII. The protein is DNA polymerase IV 2 (dinB2) of Agrobacterium fabrum (strain C58 / ATCC 33970) (Agrobacterium tumefaciens (strain C58)).